Reading from the N-terminus, the 158-residue chain is uncharacterized protein (158 aa).

A Nudix hydrolase domain is found at tyrosine 3–lysine 130. The Nudix box motif lies at glycine 34–glycine 55. Residues glutamate 49 and glutamate 53 each contribute to the Mg(2+) site.

The protein belongs to the Nudix hydrolase family. Mg(2+) is required as a cofactor.

This is an uncharacterized protein from Bacillus subtilis (strain 168).